The sequence spans 105 residues: Large ribosomal subunit protein uL23 (105 aa).

It belongs to the universal ribosomal protein uL23 family. In terms of assembly, part of the 50S ribosomal subunit. Contacts protein L29, and trigger factor when it is bound to the ribosome.

Its function is as follows. One of the early assembly proteins it binds 23S rRNA. One of the proteins that surrounds the polypeptide exit tunnel on the outside of the ribosome. Forms the main docking site for trigger factor binding to the ribosome. In Ureaplasma urealyticum serovar 10 (strain ATCC 33699 / Western), this protein is Large ribosomal subunit protein uL23.